We begin with the raw amino-acid sequence, 28 residues long: 14-3-3-like protein 4 (28 aa).

It belongs to the 14-3-3 family.

This Pseudotsuga menziesii (Douglas-fir) protein is 14-3-3-like protein 4.